A 119-amino-acid chain; its full sequence is Protein TusC (119 aa).

Belongs to the DsrF/TusC family. As to quaternary structure, heterohexamer, formed by a dimer of trimers. The hexameric TusBCD complex contains 2 copies each of TusB, TusC and TusD. The TusBCD complex interacts with TusE.

Its subcellular location is the cytoplasm. Its function is as follows. Part of a sulfur-relay system required for 2-thiolation of 5-methylaminomethyl-2-thiouridine (mnm(5)s(2)U) at tRNA wobble positions. In Photorhabdus laumondii subsp. laumondii (strain DSM 15139 / CIP 105565 / TT01) (Photorhabdus luminescens subsp. laumondii), this protein is Protein TusC.